The following is a 2380-amino-acid chain: DNA polymerase epsilon catalytic subunit A (2380 aa).

Residues 169-196 (YYNKGNNNNNNHQNYNNNNNQNNNNFNK) are compositionally biased toward low complexity. Disordered regions lie at residues 169–209 (YYNK…NNSK), 1178–1210 (FFEKTEDNDQDNDNDNDNDNDNDNDNSKPQQTD), 1766–1787 (KNTSNNSNTKNGANQNTTNDTT), 1967–1998 (QQQQQQQDNADDDDDDDVSENEEEQQQNKNKK), and 2059–2120 (KIST…TTTS). Over residues 1183–1201 (EDNDQDNDNDNDNDNDNDN) the composition is skewed to acidic residues. The segment covering 1767–1776 (NTSNNSNTKN) has biased composition (low complexity). The segment covering 1777-1787 (GANQNTTNDTT) has biased composition (polar residues). Residues 1975–1991 (NADDDDDDDVSENEEEQ) are compositionally biased toward acidic residues. Low complexity-rich tracts occupy residues 2059–2081 (KISTTSSSSNNDSTAATTTTTKD) and 2110–2120 (SSSSSTTTTTS). Zn(2+)-binding residues include C2225 and C2228. The CysA-type zinc finger occupies 2225-2288 (CSSCHSCRDI…RVPELSCIQC (64 aa)). Low complexity predominate over residues 2245–2258 (ISSRLSSQQKSNNN). The disordered stretch occupies residues 2245–2275 (ISSRLSSQQKSNNNDSDDSDDDNEENEGDDD). Positions 2259 to 2275 (DSDDSDDDNEENEGDDD) are enriched in acidic residues. C2285 and C2288 together coordinate Zn(2+). Residues C2319, C2322, C2334, and C2337 each contribute to the [4Fe-4S] cluster site. The CysB motif motif lies at 2319–2337 (CSKCNDVKSDNLGDICPQC).

Belongs to the DNA polymerase type-B family. Consists of three subunits: pole, pole2 and pole3. The cofactor is [4Fe-4S] cluster.

The protein localises to the nucleus. The enzyme catalyses DNA(n) + a 2'-deoxyribonucleoside 5'-triphosphate = DNA(n+1) + diphosphate. DNA polymerase II participates in chromosomal DNA replication. The protein is DNA polymerase epsilon catalytic subunit A (pole) of Dictyostelium discoideum (Social amoeba).